Reading from the N-terminus, the 307-residue chain is Ornithine carbamoyltransferase (307 aa).

Residues 51 to 54 (STRT), Gln-78, Arg-102, and 129 to 132 (HPVQ) each bind carbamoyl phosphate. Residues Asn-159, Asp-223, and 227-228 (SM) contribute to the L-ornithine site. Carbamoyl phosphate is bound by residues 263 to 264 (CL) and Arg-291.

Belongs to the aspartate/ornithine carbamoyltransferase superfamily. OTCase family.

Its subcellular location is the cytoplasm. It catalyses the reaction carbamoyl phosphate + L-ornithine = L-citrulline + phosphate + H(+). The protein operates within amino-acid biosynthesis; L-arginine biosynthesis; L-arginine from L-ornithine and carbamoyl phosphate: step 1/3. In terms of biological role, reversibly catalyzes the transfer of the carbamoyl group from carbamoyl phosphate (CP) to the N(epsilon) atom of ornithine (ORN) to produce L-citrulline. In Wolinella succinogenes (strain ATCC 29543 / DSM 1740 / CCUG 13145 / JCM 31913 / LMG 7466 / NCTC 11488 / FDC 602W) (Vibrio succinogenes), this protein is Ornithine carbamoyltransferase.